A 111-amino-acid chain; its full sequence is Ig kappa chain V-III region PC 7175 (111 aa).

The tract at residues 1–23 is framework-1; it reads DIVLTQSPASLAVSLGQRATISC. C23 and C92 are disulfide-bonded. The interval 24–38 is complementarity-determining-1; the sequence is RASKSVSTSGYSYMH. The framework-2 stretch occupies residues 39–53; that stretch reads WYQQKPGQPPKLLIY. The tract at residues 54 to 60 is complementarity-determining-2; that stretch reads LASNLES. The interval 61–92 is framework-3; that stretch reads GVPARFSGSGSGTDFTLNIHPVEEEDAATYYC. Residues 93 to 101 form a complementarity-determining-3 region; the sequence is QHSRELPLT. A framework-4 region spans residues 102-111; it reads FGAGTKLELK.

The protein is Ig kappa chain V-III region PC 7175 of Mus musculus (Mouse).